A 282-amino-acid polypeptide reads, in one-letter code: Dihydroorotate dehydrogenase B (NAD(+)), electron transfer subunit homolog (282 aa).

Residues 2–100 enclose the FAD-binding FR-type domain; that stretch reads GGTALNEIVK…VGPLGNPSEI (99 aa). Residues Cys225, Cys228, and Cys240 each coordinate [2Fe-2S] cluster.

It belongs to the PyrK family. Requires [2Fe-2S] cluster as cofactor. FAD serves as cofactor.

The chain is Dihydroorotate dehydrogenase B (NAD(+)), electron transfer subunit homolog from Thermotoga maritima (strain ATCC 43589 / DSM 3109 / JCM 10099 / NBRC 100826 / MSB8).